The primary structure comprises 184 residues: Cyclin-dependent kinase inhibitor 1 (184 aa).

The span at 85–98 shows a compositional bias: low complexity; sequence ISSTTLTPLSSPST. Positions 85 to 184 are disordered; that stretch reads ISSTTLTPLS…IRTRSSCSPY (100 aa).

The protein belongs to the CDI family. As to quaternary structure, interacts with cyd-1; the interaction is direct. In terms of tissue distribution, in embryos, expression is first seen in pharyngeal primordium and later in all differentiating cells. Post embryonic expression corresponds to developmental patterns of cell cycle progression in many tissues including sex myoblasts, distal tip cells, vulval cells, seam cells, neurons, intestine cells and hypodermal cells.

The protein resides in the nucleus. Functionally, negative cell-cycle regulator that functions at the G1-to-S-phase transition. Required for suspension of the cell cycle in dauer larvae and starved L1 larvae. In vulval precursor cells (VPCs), a pathway of heterochronic genes acts via cki-1 to maintain VPCs in G1 during the L2 larval stage. Cul-2 may function in ubiquitin-mediated degradation by targeting cki-1 for degradation. Involved in distal tip cell development by repressing and modulating cye-1/cdk-2 activity levels in Z1.aa/Z4.pp and in Z1.ap/Z4.pa. In Caenorhabditis elegans, this protein is Cyclin-dependent kinase inhibitor 1.